The sequence spans 290 residues: 4-hydroxybenzoate octaprenyltransferase (290 aa).

6 helical membrane-spanning segments follow: residues 38–58, 99–119, 141–161, 213–233, 238–258, and 268–288; these read LAGM…GVFF, LFGA…SMTI, LPQL…FTAV, LIIG…GWQL, IYYL…KLIV, and AFLN…LSLL.

Belongs to the UbiA prenyltransferase family. Requires Mg(2+) as cofactor.

It is found in the cell inner membrane. The catalysed reaction is all-trans-octaprenyl diphosphate + 4-hydroxybenzoate = 4-hydroxy-3-(all-trans-octaprenyl)benzoate + diphosphate. Its pathway is cofactor biosynthesis; ubiquinone biosynthesis. Catalyzes the prenylation of para-hydroxybenzoate (PHB) with an all-trans polyprenyl group. Mediates the second step in the final reaction sequence of ubiquinone-8 (UQ-8) biosynthesis, which is the condensation of the polyisoprenoid side chain with PHB, generating the first membrane-bound Q intermediate 3-octaprenyl-4-hydroxybenzoate. The sequence is that of 4-hydroxybenzoate octaprenyltransferase from Sodalis glossinidius (strain morsitans).